A 228-amino-acid chain; its full sequence is Small ribosomal subunit protein uS3 (228 aa).

The KH type-2 domain occupies 39-107 (VREYLQDKLK…PVHINIEEIR (69 aa)).

The protein belongs to the universal ribosomal protein uS3 family. As to quaternary structure, part of the 30S ribosomal subunit. Forms a tight complex with proteins S10 and S14.

Its function is as follows. Binds the lower part of the 30S subunit head. Binds mRNA in the 70S ribosome, positioning it for translation. The protein is Small ribosomal subunit protein uS3 of Pseudomonas aeruginosa (strain UCBPP-PA14).